A 451-amino-acid polypeptide reads, in one-letter code: tRNA-2-methylthio-N(6)-dimethylallyladenosine synthase (451 aa).

An MTTase N-terminal domain is found at 10–128 (KKFYTLTFGC…FPQLLEHVMQ (119 aa)). 6 residues coordinate [4Fe-4S] cluster: cysteine 19, cysteine 55, cysteine 89, cysteine 165, cysteine 169, and cysteine 172. The Radical SAM core domain occupies 151-381 (REDSIKAWVV…ISVQQEISEQ (231 aa)). In terms of domain architecture, TRAM spans 384–447 (KDLENTVQRI…SWNLYGEIFE (64 aa)).

It belongs to the methylthiotransferase family. MiaB subfamily. In terms of assembly, monomer. The cofactor is [4Fe-4S] cluster.

Its subcellular location is the cytoplasm. It catalyses the reaction N(6)-dimethylallyladenosine(37) in tRNA + (sulfur carrier)-SH + AH2 + 2 S-adenosyl-L-methionine = 2-methylsulfanyl-N(6)-dimethylallyladenosine(37) in tRNA + (sulfur carrier)-H + 5'-deoxyadenosine + L-methionine + A + S-adenosyl-L-homocysteine + 2 H(+). In terms of biological role, catalyzes the methylthiolation of N6-(dimethylallyl)adenosine (i(6)A), leading to the formation of 2-methylthio-N6-(dimethylallyl)adenosine (ms(2)i(6)A) at position 37 in tRNAs that read codons beginning with uridine. This Natranaerobius thermophilus (strain ATCC BAA-1301 / DSM 18059 / JW/NM-WN-LF) protein is tRNA-2-methylthio-N(6)-dimethylallyladenosine synthase.